Reading from the N-terminus, the 254-residue chain is Activity-regulated cytoskeleton associated protein 1 (254 aa).

Belongs to the ARC/ARG3.1 family. In terms of assembly, homooligomer; homooligomerizes into virion-like capsids. Expressed in a specific population of brain neurons, named E347, that are necessary and sufficient for proper body fat storage.

Its subcellular location is the extracellular vesicle membrane. It is found in the synapse. Master regulator of synaptic plasticity that self-assembles into virion-like capsids that encapsulate RNAs and mediate intercellular RNA transfer from motorneurons to muscles. Arc1 protein is released from motorneurons in extracellular vesicles that mediate the transfer of Arc1 mRNA into muscle cells, where Arc1 mRNA can undergo activity-dependent translation. Intercellular transfer od Arc1 mRNA is required for synaptic plasticity at the neuromuscular junction. May play a role in energy balance: required for regulation of body fat by a specific population of brain neurons, named E347, that are necessary and sufficient for proper body fat storage. The sequence is that of Activity-regulated cytoskeleton associated protein 1 from Drosophila melanogaster (Fruit fly).